The chain runs to 220 residues: MGLEEKLPNGILLANVEKLVNWTRKTSVWPAAFGLACCAIEMMTVGGSRYDIARFGMERFSATPRQADLMVVAGRVTNKMAPVLRQVYDQMPEPRWVIAMGVCASSGGMFNNYAVVQGVDHVVPVDMYLPGCPPRPEMLLDAILKLHAKIMDEPINAKRAALRLESGARTELVPSSERYAPKNRSQRKLAERQQAAQRREMGAEKPLGALEERAELNAGR.

Residues C37, C38, C103, and C132 each contribute to the [4Fe-4S] cluster site. The tract at residues 174-220 (PSSERYAPKNRSQRKLAERQQAAQRREMGAEKPLGALEERAELNAGR) is disordered. Over residues 210–220 (LEERAELNAGR) the composition is skewed to basic and acidic residues.

This sequence belongs to the complex I 20 kDa subunit family. NDH-1 is composed of 14 different subunits. Subunits NuoB, C, D, E, F, and G constitute the peripheral sector of the complex. Requires [4Fe-4S] cluster as cofactor.

The protein resides in the cell membrane. It carries out the reaction a quinone + NADH + 5 H(+)(in) = a quinol + NAD(+) + 4 H(+)(out). NDH-1 shuttles electrons from NADH, via FMN and iron-sulfur (Fe-S) centers, to quinones in the respiratory chain. The immediate electron acceptor for the enzyme in this species is believed to be a menaquinone. Couples the redox reaction to proton translocation (for every two electrons transferred, four hydrogen ions are translocated across the cytoplasmic membrane), and thus conserves the redox energy in a proton gradient. This is NADH-quinone oxidoreductase subunit B from Saccharopolyspora erythraea (strain ATCC 11635 / DSM 40517 / JCM 4748 / NBRC 13426 / NCIMB 8594 / NRRL 2338).